The chain runs to 430 residues: Adenylosuccinate synthetase (430 aa).

GTP contacts are provided by residues 12 to 18 (GDEGKGK) and 40 to 42 (GHT). Asp-13 serves as the catalytic Proton acceptor. 2 residues coordinate Mg(2+): Asp-13 and Gly-40. IMP-binding positions include 13-16 (DEGK), 38-41 (NAGH), Thr-130, Arg-144, Gln-224, Thr-239, and Arg-303. His-41 acts as the Proton donor in catalysis. 299 to 305 (VVTGRPR) provides a ligand contact to substrate. GTP contacts are provided by residues Arg-305, 331–333 (KLD), and 413–415 (STS).

Belongs to the adenylosuccinate synthetase family. In terms of assembly, homodimer. Mg(2+) is required as a cofactor.

It is found in the cytoplasm. The enzyme catalyses IMP + L-aspartate + GTP = N(6)-(1,2-dicarboxyethyl)-AMP + GDP + phosphate + 2 H(+). It participates in purine metabolism; AMP biosynthesis via de novo pathway; AMP from IMP: step 1/2. Its function is as follows. Plays an important role in the de novo pathway of purine nucleotide biosynthesis. Catalyzes the first committed step in the biosynthesis of AMP from IMP. The chain is Adenylosuccinate synthetase from Azorhizobium caulinodans (strain ATCC 43989 / DSM 5975 / JCM 20966 / LMG 6465 / NBRC 14845 / NCIMB 13405 / ORS 571).